A 320-amino-acid chain; its full sequence is Olfactory receptor 51E2 (320 aa).

Residues 1 to 27 are Extracellular-facing; that stretch reads MSSCNFTHATFLLIGIPGLEEAHFWFG. The N-linked (GlcNAc...) asparagine glycan is linked to asparagine 5. A helical transmembrane segment spans residues 28 to 48; the sequence is FPLLSMYAVALFGNCIVVFIV. Residues 49-53 lie on the Cytoplasmic side of the membrane; that stretch reads RTERS. A helical transmembrane segment spans residues 54–74; that stretch reads LHAPMYLFLCMLAAIDLALST. Topologically, residues 75–98 are extracellular; that stretch reads STMPKILALFWFDSREITFDACLA. Cysteine 96 and cysteine 178 are oxidised to a cystine. A helical membrane pass occupies residues 99 to 119; the sequence is QMFFIHTLSAIESTILLAMAF. Over 120–141 the chain is Cytoplasmic; the sequence is DRYVAICHPLRHAAVLNNTVTV. A helical membrane pass occupies residues 142-162; the sequence is QIGMVALVRGSLFFFPLPLLI. Topologically, residues 163–200 are extracellular; sequence KRLAFCHSNVLSHSYCVHQDVMKLAYTDTLPNVVYGLT. A helical membrane pass occupies residues 201–221; that stretch reads AILLVMGVDVMFISLSYFLII. Over 222-239 the chain is Cytoplasmic; that stretch reads RTVLQLPSKSERAKAFGT. Residues 240 to 260 form a helical membrane-spanning segment; sequence CVSHISVVLAFYVPLIGLSVV. Residues 261–269 are Extracellular-facing; the sequence is HRFGNSLDP. Residues 270 to 290 form a helical membrane-spanning segment; it reads IVHVLMGDVYLLLPPVINPII. The Cytoplasmic portion of the chain corresponds to 291–320; it reads YGAKTKQIRTRVLAMFKISCDKDIEAGGNT.

The protein belongs to the G-protein coupled receptor 1 family. In terms of tissue distribution, in brain, expressed in medulla oblongata by cells close to the fourth ventricle, in the area postrema, the nucleus tractus solitarius. Expressed in olfactory epithelium and vomeronasal organ. Expressed in kidney by large renal vessels, renal afferent arterioles, and extrarenal vascular beds. In small resistance vessels the expression is restricted to cells of the juxtaglomerular afferent arteriole, which mediate renin secretion. Also detected in small blood vessels in a variety of tissues including heart, diaphragm, skeletal muscle, and skin. In the heart, esophagus, and stomach it is detected in axons of autonomic neurons and neurons of the enteric plexus. Also detected in colon and liver. Expressed in the glomus cells of the carotid body.

It is found in the cell membrane. Its subcellular location is the early endosome membrane. Its function is as follows. Olfactory receptor. The activity of this receptor is probably mediated by G-proteins which induce elevation of intracellular Ca(2+), cAMP and activation of phosphorylation of the protein kinases PKA and MAPK3/MAPK1. Activation of OR51E2 may affect melanocyte proliferation, differentiation, and melanogenesis and may increase proliferation and migration of primary retinal pigment epithelial (RPE) cells. Activated by the short chain fatty acids (SCFA), acetate and propionate. In response to SCFA, may positively regulate renin secretion and increase blood pressure. May also be activated by steroid hormones and regulate cell proliferation. Activated by L-lactate in glomus cells. The chain is Olfactory receptor 51E2 (Or51e2) from Mus musculus (Mouse).